Here is a 75-residue protein sequence, read N- to C-terminus: Protein BRICK1 (75 aa).

Ala-2 is subject to N-acetylalanine. Residues 41 to 72 adopt a coiled-coil conformation; sequence MSCRSRLATLNEKLTALERRIEYIEARVTKGE.

It belongs to the BRK1 family. As to quaternary structure, homotrimer when in free form. Directly interacts with WASF2. Component of the WAVE1 complex composed of ABI2, CYFIP1 or CYFIP2, BRK1, NCKAP1 and WASF1/WAVE1. Within the complex, a heterodimer containing NCKAP1 and CYFIP1 interacts with a heterotrimer formed by WAVE1, ABI2 and BRK1.

It is found in the cytoplasm. The protein localises to the cytoskeleton. Functionally, involved in regulation of actin and microtubule organization. Part of a WAVE complex that activates the Arp2/3 complex. As component of the WAVE1 complex, required for BDNF-NTRK2 endocytic trafficking and signaling from early endosomes. This chain is Protein BRICK1 (BRK1), found in Homo sapiens (Human).